Here is a 186-residue protein sequence, read N- to C-terminus: ADP-ribosylation factor-like protein 6 (186 aa).

Glycine 2 carries the N-myristoyl glycine lipid modification. Residues 24-31 (GLDNSGKT), 69-73 (DMSGQ), and 130-133 (NKMD) contribute to the GTP site.

Belongs to the small GTPase superfamily. Arf family. Interacts with SEC61B, ARL6IP1, ARL6IP2, ARL6IP3, ARL6IP4 ARL6IP5 and ARL6IP6. Interacts (GTP-bound form) with the BBSome a complex that contains BBS1, BBS2, BBS4, BBS5, BBS7, BBS8/TTC8, BBS9 and BBIP10. Interacts (GTP-free form) with IFT27.

It localises to the cell projection. It is found in the cilium membrane. The protein localises to the cytoplasm. The protein resides in the cytoskeleton. Its subcellular location is the cilium axoneme. It localises to the cilium basal body. Its function is as follows. Involved in membrane protein trafficking at the base of the ciliary organelle. Mediates recruitment onto plasma membrane of the BBSome complex which would constitute a coat complex required for sorting of specific membrane proteins to the primary cilia. Together with the BBSome complex and LTZL1, controls SMO ciliary trafficking and contributes to the sonic hedgehog (SHH) pathway regulation. May regulate cilia assembly and disassembly and subsequent ciliary signaling events such as the Wnt signaling cascade. Isoform 2 may be required for proper retinal function and organization. This chain is ADP-ribosylation factor-like protein 6 (ARL6), found in Bos taurus (Bovine).